The following is a 116-amino-acid chain: Transcription elongation factor SPT4 homolog 1 (116 aa).

A C4-type zinc finger spans residues 19-39; that stretch reads CLRCRLVKTYDQFRDSGCENC.

The protein belongs to the SPT4 family.

It is found in the nucleus. May regulate transcription elongation by RNA polymerase II. May enhance transcriptional pausing at sites proximal to the promoter, which may in turn facilitate the assembly of an elongation competent RNA polymerase II complex. In Arabidopsis thaliana (Mouse-ear cress), this protein is Transcription elongation factor SPT4 homolog 1.